The sequence spans 65 residues: Disintegrin CC8A (65 aa).

Residues 1–65 (MNSAHPCCDP…SDCPRNRIKK (65 aa)) form the Disintegrin domain. 4 cysteine pairs are disulfide-bonded: Cys-7–Cys-30, Cys-21–Cys-27, Cys-26–Cys-51, and Cys-39–Cys-58. The Cell attachment site motif lies at 43-45 (RGD).

The protein belongs to the disintegrin family. Dimeric disintegrin subfamily. As to quaternary structure, heterodimer with CC8B; disulfide-linked. Expressed by the venom gland.

The protein localises to the secreted. Its function is as follows. Inhibits integrins alpha-IIb/beta-3 (ITGA2B/ITGB3), alpha-V/beta-3 (ITGAV/ITGB3), and alpha-5/beta-1 (ITGA5/ITGB1). The sequence is that of Disintegrin CC8A from Cerastes cerastes (Horned desert viper).